Consider the following 214-residue polypeptide: ATP-dependent Clp protease proteolytic subunit (214 aa).

Ser-113 functions as the Nucleophile in the catalytic mechanism. Residue His-138 is part of the active site.

It belongs to the peptidase S14 family. As to quaternary structure, fourteen ClpP subunits assemble into 2 heptameric rings which stack back to back to give a disk-like structure with a central cavity, resembling the structure of eukaryotic proteasomes.

It is found in the cytoplasm. It catalyses the reaction Hydrolysis of proteins to small peptides in the presence of ATP and magnesium. alpha-casein is the usual test substrate. In the absence of ATP, only oligopeptides shorter than five residues are hydrolyzed (such as succinyl-Leu-Tyr-|-NHMec, and Leu-Tyr-Leu-|-Tyr-Trp, in which cleavage of the -Tyr-|-Leu- and -Tyr-|-Trp bonds also occurs).. Cleaves peptides in various proteins in a process that requires ATP hydrolysis. Has a chymotrypsin-like activity. Plays a major role in the degradation of misfolded proteins. The protein is ATP-dependent Clp protease proteolytic subunit of Alkalilimnicola ehrlichii (strain ATCC BAA-1101 / DSM 17681 / MLHE-1).